Consider the following 61-residue polypeptide: Toxin S5C1 (61 aa).

Disulfide bonds link Cys-3–Cys-22, Cys-16–Cys-39, Cys-41–Cys-53, and Cys-54–Cys-59. Positions Arg-45–Asp-47 match the Cell attachment site motif.

The protein belongs to the three-finger toxin family. Short-chain subfamily. Antiplatelet toxin sub-subfamily. In terms of tissue distribution, expressed by the venom gland.

It localises to the secreted. Inhibits ADP-induced platelet aggregation and inhibits the binding of purified platelet fibrinogen receptor alpha-IIb/beta-3 (ITGA2B/ITGB3) to immobilized fibrinogen. The protein is Toxin S5C1 of Dendroaspis jamesoni kaimosae (Eastern Jameson's mamba).